The primary structure comprises 672 residues: GPI mannosyltransferase pigv-1 (672 aa).

At 1-134 (MRRREPGRDV…TQRCLGFCFR (134 aa)) the chain is on the cytoplasmic side. Positions 82 to 94 (REESDSSSSREDS) are enriched in basic and acidic residues. Residues 82-115 (REESDSSSSREDSPLGSTETGESCSTTDDEESKE) form a disordered region. Over residues 97–107 (GSTETGESCST) the composition is skewed to low complexity. Residues 135-155 (QLFFSRMWVFILQFIASYYAG) traverse the membrane as a helical segment. Over 156-239 (DRFRTDGFNL…NGMESVFGWT (84 aa)) the chain is Extracellular. The helical transmembrane segment at 240–260 (FPPWVTITLAAVFVNLFCFLL) threads the bilayer. The Cytoplasmic portion of the chain corresponds to 261–277 (CGMTLYQVVLIMTRSVK). The next 2 membrane-spanning stretches (helical) occupy residues 278 to 298 (ISLLAVSIFAFNPASIFFSSA) and 299 to 319 (YSESMFFTMTLTGFVFMLFGL). At 320–345 (RGKGFWHRMLKGFTGTICFGLTFAVR) the chain is on the extracellular side. Residues 346–366 (SNGLLNFLYVAWIWCGTLLWD) traverse the membrane as a helical segment. Over 367-423 (EEMPIPDCHKLISTLAATKNERYKQEWQAKFWRFQQKRKQNRKVFRWTDPNFSRCVT) the chain is Cytoplasmic. A helical transmembrane segment spans residues 424 to 444 (LFIVIVCAISATLLFFTPYVF). At 445–520 (MTNFTADEFC…WSVKFFGYWK (76 aa)) the chain is on the extracellular side. A helical transmembrane segment spans residues 521–541 (IKKIPCFLMMLPAAILTVLAI). The Cytoplasmic segment spans residues 542–569 (KSSWNDVFLNKRWNNIWVLTARSDHSLP). Residues 570–590 (MAIHSSVLLFVAIFYINSEVF) traverse the membrane as a helical segment. Residues 591 to 592 (TR) are Extracellular-facing. Residues 593 to 613 (IIFSSSPFIYIYIATYIDKLT) traverse the membrane as a helical segment. The Cytoplasmic portion of the chain corresponds to 614–648 (QGTIAGNRLWQYFESPGILPFFVFRRVWQDGWRGK). Residues 649–669 (LLYIYILGYFVFGTMAHSAWL) form a helical membrane-spanning segment. Residues 670-672 (PFT) are Extracellular-facing.

It belongs to the PIGV family. Expressed in epithelial tissues including the epidermis, pharynx, intestine, rectum and excretory cell during embryogenesis.

It localises to the endoplasmic reticulum membrane. The protein operates within glycolipid biosynthesis; glycosylphosphatidylinositol-anchor biosynthesis. Its function is as follows. Alpha-1,6-mannosyltransferase involved in glycosylphosphatidylinositol-anchor biosynthesis. Transfers the second mannose to the glycosylphosphatidylinositol during GPI precursor assembly. Required for maintenance of epithelial integrity during embryogenesis. The chain is GPI mannosyltransferase pigv-1 from Caenorhabditis elegans.